A 726-amino-acid chain; its full sequence is Mitotic spindle checkpoint protein MAD1 (726 aa).

Residues Met-1–Gln-30 form a disordered region. Coiled coils occupy residues Ala-68–Ile-246 and Ser-272–Asp-625.

It belongs to the MAD1 family. As to quaternary structure, homodimer. Part of the mitotic checkpoint complex (MCC). Interacts with MAD2 and NUA.

Its subcellular location is the nucleus envelope. Its function is as follows. Required for the execution of the mitotic checkpoint which monitors the process of kinetochore-spindle attachment and delays the onset of anaphase when this process is not complete. It inhibits the activity of the anaphase promoting complex by sequestering CDC20 until all chromosomes are aligned at the metaphase plate. Required for anchoring MAD2 to the nuclear envelope. The polypeptide is Mitotic spindle checkpoint protein MAD1 (Arabidopsis thaliana (Mouse-ear cress)).